The primary structure comprises 311 residues: MTGSIEKPRLIVVMGPTAVGKTAAAIRLAKQWGGEIISADSMQVYRHMDIGTAKPTPDQQCRVPHHLIDIVNPDESFNAACFMERARAVIAELHKRGKKIIVVGGTGLYIRAVLGGLFDGPAADEALRRHYFTILEREGKAGLYGMLKARDRRAAAIIHPNDTTRMIRALEVLDLTGVSIVEQQQEHRFAQRPYRVLKIGLRCSRSVLYERIEARTEEMLAQGFLDEVRQLLDMGFHEGLRPMQALGYRQMVGFLKGELDLDEAVDQLKRETRRYAKRQLTWFGADPEIRWFEPGNEEEILRYAGRFLRGE.

Residue Gly-15–Thr-22 participates in ATP binding. Residue Thr-17–Thr-22 coordinates substrate. Positions Asp-40–Gln-43 are interaction with substrate tRNA.

The protein belongs to the IPP transferase family. Monomer. It depends on Mg(2+) as a cofactor.

It carries out the reaction adenosine(37) in tRNA + dimethylallyl diphosphate = N(6)-dimethylallyladenosine(37) in tRNA + diphosphate. In terms of biological role, catalyzes the transfer of a dimethylallyl group onto the adenine at position 37 in tRNAs that read codons beginning with uridine, leading to the formation of N6-(dimethylallyl)adenosine (i(6)A). This chain is tRNA dimethylallyltransferase 2, found in Syntrophus aciditrophicus (strain SB).